Consider the following 358-residue polypeptide: tRNA (guanine-N(7)-)-methyltransferase (358 aa).

Residues M1–D29 form a disordered region. S-adenosyl-L-methionine is bound by residues G99 and E122–I123. Low complexity predominate over residues T151–T186. Residues T151 to T194 form a disordered region. S-adenosyl-L-methionine contacts are provided by residues N209 to T210 and C229. D232 is a catalytic residue. An S-adenosyl-L-methionine-binding site is contributed by T330–E332.

The protein belongs to the class I-like SAM-binding methyltransferase superfamily. TrmB family. Forms a complex with trm82.

Its subcellular location is the nucleus. The enzyme catalyses guanosine(46) in tRNA + S-adenosyl-L-methionine = N(7)-methylguanosine(46) in tRNA + S-adenosyl-L-homocysteine. It functions in the pathway tRNA modification; N(7)-methylguanine-tRNA biosynthesis. Catalyzes the formation of N(7)-methylguanine at position 46 (m7G46) in tRNA. The chain is tRNA (guanine-N(7)-)-methyltransferase (trm8) from Aspergillus fumigatus (strain ATCC MYA-4609 / CBS 101355 / FGSC A1100 / Af293) (Neosartorya fumigata).